The following is a 108-amino-acid chain: Nitrogenase-stabilizing/protective protein NifW (108 aa).

Belongs to the NifW family. Homotrimer; associates with NifD.

Functionally, may protect the nitrogenase Fe-Mo protein from oxidative damage. The sequence is that of Nitrogenase-stabilizing/protective protein NifW from Zymomonas mobilis subsp. mobilis (strain ATCC 31821 / ZM4 / CP4).